Consider the following 357-residue polypeptide: Mitogen-activated protein kinase kinase SIPKK (357 aa).

The Protein kinase domain occupies 70–330; it reads FEAVKVIGKG…ANELMRHPFI (261 aa). ATP-binding positions include 76–84 and lysine 99; that span reads IGKGNGGIV. The active-site Proton acceptor is aspartate 192.

It belongs to the protein kinase superfamily. STE Ser/Thr protein kinase family. MAP kinase kinase subfamily. In terms of assembly, interacts with SIPK.

It carries out the reaction L-tyrosyl-[protein] + ATP = O-phospho-L-tyrosyl-[protein] + ADP + H(+). The enzyme catalyses L-seryl-[protein] + ATP = O-phospho-L-seryl-[protein] + ADP + H(+). It catalyses the reaction L-threonyl-[protein] + ATP = O-phospho-L-threonyl-[protein] + ADP + H(+). Its function is as follows. Phosphorylates myelin basic protein (MBP) in vitro. May be involved in disease resistance. The polypeptide is Mitogen-activated protein kinase kinase SIPKK (Nicotiana tabacum (Common tobacco)).